The following is a 521-amino-acid chain: Probable feruloyl esterase B (521 aa).

The first 17 residues, 1 to 17 (MKVSSLLSVALPGAALA), serve as a signal peptide directing secretion. Disulfide bonds link Cys-26–Cys-72 and Cys-61–Cys-111. 6 N-linked (GlcNAc...) asparagine glycosylation sites follow: Asn-37, Asn-51, Asn-77, Asn-95, Asn-144, and Asn-177. Cystine bridges form between Cys-184-Cys-438, Cys-253-Cys-270, and Cys-279-Cys-288. Ser-185 (acyl-ester intermediate) is an active-site residue. Ca(2+) is bound by residues Asp-254, Asp-257, Ala-259, Asp-261, and Ile-263. N-linked (GlcNAc...) asparagine glycosylation is found at Asn-284, Asn-347, Asn-352, and Asn-378. Active-site charge relay system residues include Asp-397 and His-437. Asn-488 and Asn-511 each carry an N-linked (GlcNAc...) asparagine glycan. Cys-498 and Cys-520 form a disulfide bridge.

This sequence belongs to the tannase family.

Its subcellular location is the secreted. It catalyses the reaction feruloyl-polysaccharide + H2O = ferulate + polysaccharide.. Its function is as follows. Involved in degradation of plant cell walls. Hydrolyzes the feruloyl-arabinose ester bond in arabinoxylans as well as the feruloyl-galactose and feruloyl-arabinose ester bonds in pectin. In Aspergillus niger (strain ATCC MYA-4892 / CBS 513.88 / FGSC A1513), this protein is Probable feruloyl esterase B (faeB).